Reading from the N-terminus, the 356-residue chain is Heparan sulfate 2-O-sulfotransferase 1 (356 aa).

Topologically, residues 1–11 (MGLLRIMMPPK) are cytoplasmic. The helical; Signal-anchor for type II membrane protein transmembrane segment at 12–28 (LQLLAVVAFAVAMLFLE) threads the bilayer. The stretch at 24-51 (MLFLENQIQKLEESRAKLERAIARHEVR) forms a coiled coil. Topologically, residues 29–356 (NQIQKLEESR…FYEKIYPKSN (328 aa)) are lumenal. Residues Lys-83, Thr-84, Ala-85, Ser-86, Thr-87, and Ser-88 each coordinate adenosine 3',5'-bisphosphate. Asn-108 and Asn-127 each carry an N-linked (GlcNAc...) asparagine glycan. Active-site residues include His-140 and His-142. Residues Arg-164 and Ser-172 each contribute to the adenosine 3',5'-bisphosphate site. 2 disulfide bridges follow: Cys-201–Cys-209 and Cys-222–Cys-228. Tyr-279, Ser-285, Thr-290, and Lys-293 together coordinate adenosine 3',5'-bisphosphate.

It belongs to the sulfotransferase 3 family. In terms of assembly, homotrimer. Interacts with the C5-epimerase GLCE. Post-translationally, N-glycosylated.

Its subcellular location is the golgi apparatus membrane. Functionally, catalyzes the transfer of a sulfo group from 3'-phospho-5'-adenylyl sulfate (PAPS) to the 2-OH position of iduronic acid (IdoA) or glucuronic acid (GlcA) within the heparan sulfate (HS) chain and participates in HS biosynthesis. Required for metanephric development of kidney formation, suggesting that 2-O-sulfation within HS is essential for signaling between ureteric bud and metanephric mesenchyme. The sequence is that of Heparan sulfate 2-O-sulfotransferase 1 from Cricetulus griseus (Chinese hamster).